A 454-amino-acid polypeptide reads, in one-letter code: Kynurenine--oxoglutarate transaminase 3 (454 aa).

F2 is subject to N-acetylserine. Position 71 (G71) interacts with substrate. K116 carries the N6-acetyllysine; alternate modification. K116 carries the N6-succinyllysine; alternate modification. N218 contributes to the substrate binding site. Residue K280 is modified to N6-(pyridoxal phosphate)lysine. Substrate is bound at residue R429.

It belongs to the class-I pyridoxal-phosphate-dependent aminotransferase family. In terms of assembly, homodimer. It depends on pyridoxal 5'-phosphate as a cofactor.

It catalyses the reaction L-kynurenine + 2-oxoglutarate = kynurenate + L-glutamate + H2O. The enzyme catalyses L-kynurenine + glyoxylate = kynurenate + glycine + H2O. It carries out the reaction 3-hydroxy-L-kynurenine + glyoxylate = xanthurenate + glycine + H2O. The catalysed reaction is an S-substituted L-cysteine + H2O = a thiol + pyruvate + NH4(+). The protein operates within amino-acid degradation; L-kynurenine degradation; kynurenate from L-kynurenine: step 1/2. Its function is as follows. Catalyzes the irreversible transamination of the L-tryptophan metabolite L-kynurenine to form kynurenic acid (KA), an intermediate in the tryptophan catabolic pathway which is also a broad spectrum antagonist of the three ionotropic excitatory amino acid receptors among others. May catalyze the beta-elimination of S-conjugates and Se-conjugates of L-(seleno)cysteine, resulting in the cleavage of the C-S or C-Se bond. Has transaminase activity towards L-kynurenine, tryptophan, phenylalanine, serine, cysteine, methionine, histidine, glutamine and asparagine with glyoxylate as an amino group acceptor (in vitro). Has lower activity with 2-oxoglutarate as amino group acceptor (in vitro). This Homo sapiens (Human) protein is Kynurenine--oxoglutarate transaminase 3.